A 1182-amino-acid polypeptide reads, in one-letter code: WD repeat-containing protein on Y chromosome (1182 aa).

WD repeat units follow at residues 155–199 (EEIT…LRSA), 323–362 (RIPL…EPSA), 366–405 (GHNG…LLQT), 456–495 (THAA…RKII), 508–547 (TIDI…VVRN), 595–635 (FHTD…RRYN), 740–779 (KTGD…IPKA), and 823–862 (GHLK…LGTL). The segment at 1031–1182 (TKAGANLDQP…PKAKTDRETH (152 aa)) is disordered. 2 stretches are compositionally biased toward low complexity: residues 1079-1092 (GVSS…VSQG) and 1103-1121 (TTSL…PKGS).

This is WD repeat-containing protein on Y chromosome from Drosophila virilis (Fruit fly).